A 325-amino-acid polypeptide reads, in one-letter code: 4-hydroxy-3-methylbut-2-enyl diphosphate reductase (325 aa).

Cys25 lines the [4Fe-4S] cluster pocket. (2E)-4-hydroxy-3-methylbut-2-enyl diphosphate-binding residues include His54 and His87. Dimethylallyl diphosphate contacts are provided by His54 and His87. Isopentenyl diphosphate contacts are provided by His54 and His87. Residue Cys109 participates in [4Fe-4S] cluster binding. His137 lines the (2E)-4-hydroxy-3-methylbut-2-enyl diphosphate pocket. His137 provides a ligand contact to dimethylallyl diphosphate. His137 is an isopentenyl diphosphate binding site. The active-site Proton donor is Glu139. Thr179 lines the (2E)-4-hydroxy-3-methylbut-2-enyl diphosphate pocket. Cys209 provides a ligand contact to [4Fe-4S] cluster. 4 residues coordinate (2E)-4-hydroxy-3-methylbut-2-enyl diphosphate: Ser237, Ser238, Asn239, and Ser282. Residues Ser237, Ser238, Asn239, and Ser282 each contribute to the dimethylallyl diphosphate site. Ser237, Ser238, Asn239, and Ser282 together coordinate isopentenyl diphosphate.

The protein belongs to the IspH family. Requires [4Fe-4S] cluster as cofactor.

The enzyme catalyses isopentenyl diphosphate + 2 oxidized [2Fe-2S]-[ferredoxin] + H2O = (2E)-4-hydroxy-3-methylbut-2-enyl diphosphate + 2 reduced [2Fe-2S]-[ferredoxin] + 2 H(+). It carries out the reaction dimethylallyl diphosphate + 2 oxidized [2Fe-2S]-[ferredoxin] + H2O = (2E)-4-hydroxy-3-methylbut-2-enyl diphosphate + 2 reduced [2Fe-2S]-[ferredoxin] + 2 H(+). It participates in isoprenoid biosynthesis; dimethylallyl diphosphate biosynthesis; dimethylallyl diphosphate from (2E)-4-hydroxy-3-methylbutenyl diphosphate: step 1/1. It functions in the pathway isoprenoid biosynthesis; isopentenyl diphosphate biosynthesis via DXP pathway; isopentenyl diphosphate from 1-deoxy-D-xylulose 5-phosphate: step 6/6. Catalyzes the conversion of 1-hydroxy-2-methyl-2-(E)-butenyl 4-diphosphate (HMBPP) into a mixture of isopentenyl diphosphate (IPP) and dimethylallyl diphosphate (DMAPP). Acts in the terminal step of the DOXP/MEP pathway for isoprenoid precursor biosynthesis. This Corynebacterium glutamicum (strain ATCC 13032 / DSM 20300 / JCM 1318 / BCRC 11384 / CCUG 27702 / LMG 3730 / NBRC 12168 / NCIMB 10025 / NRRL B-2784 / 534) protein is 4-hydroxy-3-methylbut-2-enyl diphosphate reductase.